Consider the following 344-residue polypeptide: Dihydroorotate dehydrogenase (quinone) (344 aa).

Residues 64-68 (AGLDK) and threonine 88 each bind FMN. Lysine 68 provides a ligand contact to substrate. A substrate-binding site is contributed by 113-117 (NRMGF). Residues asparagine 144 and asparagine 177 each contribute to the FMN site. Asparagine 177 contacts substrate. The active-site Nucleophile is the serine 180. Asparagine 182 serves as a coordination point for substrate. FMN-binding residues include lysine 222 and threonine 250. 251-252 (NT) serves as a coordination point for substrate. FMN is bound by residues glycine 273, glycine 302, and 323–324 (YS).

The protein belongs to the dihydroorotate dehydrogenase family. Type 2 subfamily. In terms of assembly, monomer. It depends on FMN as a cofactor.

The protein resides in the cell membrane. It catalyses the reaction (S)-dihydroorotate + a quinone = orotate + a quinol. The protein operates within pyrimidine metabolism; UMP biosynthesis via de novo pathway; orotate from (S)-dihydroorotate (quinone route): step 1/1. Catalyzes the conversion of dihydroorotate to orotate with quinone as electron acceptor. The sequence is that of Dihydroorotate dehydrogenase (quinone) from Polynucleobacter necessarius subsp. necessarius (strain STIR1).